The chain runs to 2871 residues: MRRGGLLEVALGFTVLLASYTSHGADTNLEAGNVKETRANRAKRRGGGGHDALKGPNVCGSRYNAYCCPGWKTLPGGNQCIVPICRHSCGDGFCSRPNMCTCPSGQIAPSCGSRSIQHCNIRCMNGGSCSDDHCLCQKGYIGTHCGQPVCESGCLNGGRCVAPNRCACTYGFTGPQCERDYRTGPCFTVISNQMCQGQLSGIVCTKTLCCATVGRAWGHPCEMCPAQPHPCRRGFIPNIRTGACQDVDECQAIPGLCQGGNCINTVGSFECKCPAGHKFNEVSQKCEDIDECSTIPGICDGGECTNTVSSYFCKCPPGFYTSPDGTRCIDVRPGYCYTALANGRCSNQLPQSITKMQCCCDVGRCWSPGVTVAPEMCPIRATEDFNKLCSVPMVIPERPGYPPPPLGPVPPVQPVPPGFPPGPQIMIPRPPVEYPYPSREPPRVLPVNVTDYCQLFRYLCQNGRCIPTPGSYRCECNKGFQLDLRGECIDVDECEKNPCAGGECINTQGSYTCQCRPGYQSTLTRTECRDIDECLQNGRICNNGRCINTDGSFHCVCNAGFHVTRDGKNCEDMDECSIRNMCLNGMCINEDGSFKCICKPGFQLASDGRYCKDINECETPGICMNGRCVNTDGSYRCECFPGLAVGLDGRVCVDTHMRSTCYGGYKRGQCVKPLFGAVTKSECCCASTEYAFGEPCQPCPSQNSAEYQALCSSGPGITSAGSDINECALDPDICPNGICENLRGTYKCICNSGYEVDSTGKNCVDINECVLNSLLCDNGQCRNTPGSFVCTCPKGFIYKPELKTCEDIDECESSPCINGVCKNSPGSFICECSSESTLDPTKTICIETIKGTCWQTVIDGRCEININGATLKSQCCSSLGAAWGSPCTPCQVDPICGKGYSRIKGTQCEDIDECEVFPGVCKNGLCVNSKGSFKCQCPSGMTLDATGRICLDIRLETCFLRYEDEECTLPVAGRHRMDACCCSVGAAWGTEECEECPVRNTPEYEELCPRGPGFATKEITNGKRFFKDINECKMIPNLCTHGKCRNTIGSFKCRCDSGFALDSEERNCTDIDECRISPDLCGRGQCVNTPGDFECKCDEGYESGFMMMKNCMDIDECQRDPLLCRGGVCLNTEGSYRCECPPGHQLAPNISACIDINECELSAHLCPHGRCVNLIGKYQCACNPGYHSTPDRLFCVDIDECSIMNGGCETFCTNSEGSYECSCQPGFALMPDQRSCTDIDECEDNPNICDGGQCTNIPGEYRCLCYDGFMASEDMKTCVDVNECDLNPNICLSGTCENTKGSFICHCDMGYSGKKGKTGCTDINECEIGAHNCDRHAVCTNTAGSFKCSCSPGWIGDGIKCTDLDECSNGTHMCSQHADCKNTMGSYRCLCKEGYTGDGFTCTDLDECSENLNLCGNGQCLNAPGGYRCECDMGFVPSADGKACEDIDECSLPNICVFGTCHNLPGLFRCECEIGYELDRSGGNCTDVNECLDPTTCISGNCVNTPGSYTCDCPPDFELNPTRVGCVDTRSGNCYLDIRPRGDNGDTACSNEIGVGVSKASCCCSLGKAWGTPCELCPPVNTSEYKILCPGGEGFRPNPITVILEDIDECQELPGLCQGGKCINTFGSFQCRCPTGYYLNEDTRVCDDVNECETPGICGPGTCYNTVGNYTCICPPDYMQVNGGNNCMDMRRSLCYRNYYADNQTCDGELLFNMTKKMCCCSYNIGRAWNKPCEQCPIPSTDEFATLCGSQRPGFVIDIYTGLPVDIDECREIPGVCENGVCINMVGSFRCECPVGFFYNDKLLVCEDIDECQNGPVCQRNAECINTAGSYRCDCKPGYRFTSTGQCNDRNECQEIPNICSHGQCIDTVGSFYCLCHTGFKTNADQTMCLDINECERDACGNGTCRNTIGSFNCRCNHGFILSHNNDCIDVDECATGNGNLCRNGQCINTVGSFQCQCNEGYEVAPDGRTCVDINECLLDPRKCAPGTCQNLDGSYRCICPPGYSLQNDKCEDIDECVEEPEICALGTCSNTEGSFKCLCPDGFSLSSTGRRCQDLRMSYCYAKFEGGKCSSPKSRNHSKQECCCALKGEGWGDPCELCPTEPDEAFRQICPYGSGIIVGPDDSAVDMDECKEPDVCKHGQCINTDGSYRCECPFGYILQGNECVDTDECSVGNPCGNGTCKNVIGGFECTCEEGFEPGPMMTCEDINECAQNPLLCAFRCVNTYGSYECKCPAGYVLREDRRMCKDEDECEEGKHDCAEKQMECKNLIGTYLCICGPGYQRRPDGEGCVDENECQTKPGICENGRCLNTRGSYTCECNDGFTASPNQDECLDNREGYCFTEVLQNMCQIGSSNRNPVTKSECCCDGGRGWGPHCEICPFQGTVAFKKLCPHGRGFMTNGADIDECKVIHDVCRNGECVNDRGSYHCICKTGYTPDITGTACVDLNECNQAPKPCNFICKNTEGSYQCSCPKGYILQEDGRSCKDLDECATKQHNCQFLCVNTIGSFTCKCPPGFTQHHTACIDNNECTSDINLCGSKGICQNTPGSFTCECQRGFSLDPSGASCEDVDECEGNHRCQHGCQNIIGGYRCSCPQGYLQHYQWNQCVDENECLSAHICGGASCHNTLGSYKCMCPAGFQYEQFSGGCQDINECGSAQAPCSYGCSNTEGGYLCACPPGYFRIGQGHCVSGMGMGRGNPEPPASGEMDDNSLSPEACYECKINGYPKRGRKRRSANETDASNIEDQPEIEANVSLASWDVEKTAVFAFNISHISNKVRILELLPALTTLTNHNRYLIESGNENGFFKINQKEGISYLHFTKKKPVAGTYSLQISSTPLYKKKELNQLEDKYDKDYLSGELGDNLKMKIQILLH.

The first 24 residues, 1–24, serve as a signal peptide directing secretion; sequence MRRGGLLEVALGFTVLLASYTSHG. Positions 25–44 are excised as a propeptide; sequence ADTNLEAGNVKETRANRAKR. Positions 45-81 are fibrillin unique N-terminal (FUN) domain; it reads RGGGGHDALKGPNVCGSRYNAYCCPGWKTLPGGNQCI. Residues 45-450 form an N-terminal domain region; it reads RGGGGHDALK…PPRVLPVNVT (406 aa). 11 disulfides stabilise this stretch: C59–C68, C67–C80, C85–C94, C89–C100, C102–C111, C119–C129, C123–C134, C136–C145, C150–C160, C154–C166, and C168–C177. EGF-like domains lie at 81 to 112, 115 to 146, and 147 to 178; these read IVPI…PSCG, SIQH…THCG, and QPVC…PQCE. Residues 119–329 are interaction with MFAP4; that stretch reads CNIRCMNGGS…YTSPDGTRCI (211 aa). Residues 184–236 enclose the TB 1 domain; the sequence is GPCFTVISNQMCQGQLSGIVCTKTLCCATVGRAWGHPCEMCPAQPHPCRRGFI. The interval 195-221 is hybrid domain 1; it reads CQGQLSGIVCTKTLCCATVGRAWGHPC. The 42-residue stretch at 246 to 287 folds into the EGF-like 4; calcium-binding domain; sequence DVDECQAIPGLCQGGNCINTVGSFECKCPAGHKFNEVSQKCE. Disulfide bonds link C250/C262, C257/C271, C273/C286, C292/C304, C299/C313, and C315/C328. O-linked (Glc) serine glycosylation is present at S268. In terms of domain architecture, EGF-like 5; calcium-binding spans 288–329; that stretch reads DIDECSTIPGICDGGECTNTVSSYFCKCPPGFYTSPDGTRCI. The 56-residue stretch at 334 to 389 folds into the TB 2 domain; the sequence is GYCYTALANGRCSNQLPQSITKMQCCCDVGRCWSPGVTVAPEMCPIRATEDFNKLC. A glycan (N-linked (GlcNAc...) asparagine) is linked at N448. In terms of domain architecture, EGF-like 6 spans 449–489; that stretch reads VTDYCQLFRYLCQNGRCIPTPGSYRCECNKGFQLDLRGECI. 15 cysteine pairs are disulfide-bonded: C453–C465, C460–C474, C476–C488, C494–C504, C499–C513, C515–C528, C534–C546, C541–C555, C557–C570, C576–C587, C582–C596, C598–C611, C617–C628, C623–C637, and C639–C652. An O-linked (Glc) serine glycan is attached at S471. Residues 490–529 enclose the EGF-like 7; calcium-binding domain; the sequence is DVDECEKNPCAGGECINTQGSYTCQCRPGYQSTLTRTECR. The O-linked (Glc) serine glycan is linked to S510. In terms of domain architecture, EGF-like 8; calcium-binding spans 530-571; that stretch reads DIDECLQNGRICNNGRCINTDGSFHCVCNAGFHVTRDGKNCE. Residues 572–612 enclose the EGF-like 9; calcium-binding domain; sequence DMDECSIRNMCLNGMCINEDGSFKCICKPGFQLASDGRYCK. Residues 613-653 enclose the EGF-like 10; calcium-binding domain; sequence DINECETPGICMNGRCVNTDGSYRCECFPGLAVGLDGRVCV. The TB 3 domain occupies 659-711; sequence STCYGGYKRGQCVKPLFGAVTKSECCCASTEYAFGEPCQPCPSQNSAEYQALC. One can recognise an EGF-like 11; calcium-binding domain in the interval 723–764; that stretch reads DINECALDPDICPNGICENLRGTYKCICNSGYEVDSTGKNCV. 16 cysteine pairs are disulfide-bonded: C727–C739, C734–C748, C750–C763, C769–C781, C776–C790, C792–C805, C811–C821, C816–C830, C832–C845, C853–C875, C862–C887, C876–C890, C896–C908, C914–C926, C921–C935, and C937–C950. The region spanning 765–806 is the EGF-like 12; calcium-binding domain; the sequence is DINECVLNSLLCDNGQCRNTPGSFVCTCPKGFIYKPELKTCE. The EGF-like 13; calcium-binding domain occupies 807 to 846; the sequence is DIDECESSPCINGVCKNSPGSFICECSSESTLDPTKTICI. Residues 851 to 902 form the TB 4 domain; that stretch reads GTCWQTVIDGRCEININGATLKSQCCSSLGAAWGSPCTPCQVDPICGKGYSR. Positions 862-887 are hybrid domain 2; it reads CEININGATLKSQCCSSLGAAWGSPC. Positions 910 to 951 constitute an EGF-like 14; calcium-binding domain; that stretch reads DIDECEVFPGVCKNGLCVNSKGSFKCQCPSGMTLDATGRICL. In terms of domain architecture, TB 5 spans 956 to 1008; sequence ETCFLRYEDEECTLPVAGRHRMDACCCSVGAAWGTEECEECPVRNTPEYEELC. Residues 1028-1069 form the EGF-like 15; calcium-binding domain; sequence DINECKMIPNLCTHGKCRNTIGSFKCRCDSGFALDSEERNCT. 46 disulfides stabilise this stretch: C1032–C1044, C1039–C1053, C1055–C1068, C1074–C1086, C1081–C1095, C1097–C1111, C1117–C1129, C1124–C1138, C1140–C1153, C1159–C1171, C1166–C1180, C1182–C1195, C1201–C1212, C1208–C1221, C1223–C1236, C1242–C1254, C1249–C1263, C1265–C1278, C1284–C1296, C1291–C1305, C1307–C1320, C1326–C1339, C1333–C1348, C1350–C1361, C1367–C1380, C1374–C1389, C1391–C1402, C1408–C1420, C1415–C1429, C1431–C1444, C1450–C1461, C1456–C1470, C1472–C1485, C1491–C1502, C1497–C1511, C1513–C1526, C1534–C1562, C1549–C1574, C1563–C1577, C1564–C1589, C1610–C1622, C1617–C1631, C1633–C1646, C1652–C1663, C1658–C1672, and C1674–C1687. N1067 is a glycosylation site (N-linked (GlcNAc...) asparagine). One can recognise an EGF-like 16; calcium-binding domain in the interval 1070-1112; it reads DIDECRISPDLCGRGQCVNTPGDFECKCDEGYESGFMMMKNCM. An EGF-like 17; calcium-binding domain is found at 1113–1154; the sequence is DIDECQRDPLLCRGGVCLNTEGSYRCECPPGHQLAPNISACI. S1135 carries an O-linked (Glc) serine glycan. The N-linked (GlcNAc...) asparagine glycan is linked to N1149. Positions 1155 to 1196 constitute an EGF-like 18; calcium-binding domain; it reads DINECELSAHLCPHGRCVNLIGKYQCACNPGYHSTPDRLFCV. The EGF-like 19; calcium-binding domain occupies 1197–1237; that stretch reads DIDECSIMNGGCETFCTNSEGSYECSCQPGFALMPDQRSCT. S1218 is a glycosylation site (O-linked (Glc) serine). The 42-residue stretch at 1238 to 1279 folds into the EGF-like 20; calcium-binding domain; it reads DIDECEDNPNICDGGQCTNIPGEYRCLCYDGFMASEDMKTCV. The 42-residue stretch at 1280–1321 folds into the EGF-like 21; calcium-binding domain; it reads DVNECDLNPNICLSGTCENTKGSFICHCDMGYSGKKGKTGCT. An O-linked (Glc) serine glycan is attached at S1302. The 41-residue stretch at 1322-1362 folds into the EGF-like 22; calcium-binding domain; sequence DINECEIGAHNCDRHAVCTNTAGSFKCSCSPGWIGDGIKCT. Residue S1345 is glycosylated (O-linked (Glc) serine). Residues 1363–1403 form the EGF-like 23; calcium-binding domain; it reads DLDECSNGTHMCSQHADCKNTMGSYRCLCKEGYTGDGFTCT. Residue N1369 is glycosylated (N-linked (GlcNAc...) asparagine). An O-linked (Glc) serine glycan is attached at S1386. In terms of domain architecture, EGF-like 24; calcium-binding spans 1404–1445; the sequence is DLDECSENLNLCGNGQCLNAPGGYRCECDMGFVPSADGKACE. The EGF-like 25; calcium-binding domain occupies 1446 to 1486; sequence DIDECSLPNICVFGTCHNLPGLFRCECEIGYELDRSGGNCT. N1484 is a glycosylation site (N-linked (GlcNAc...) asparagine). Residues 1487-1527 enclose the EGF-like 26; calcium-binding domain; the sequence is DVNECLDPTTCISGNCVNTPGSYTCDCPPDFELNPTRVGCV. O-linked (Glc) serine glycosylation is present at S1508. A C-terminal domain region spans residues 1528 to 2731; the sequence is DTRSGNCYLD…GYPKRGRKRR (1204 aa). The TB 6 domain maps to 1532–1589; sequence GNCYLDIRPRGDNGDTACSNEIGVGVSKASCCCSLGKAWGTPCELCPPVNTSEYKILC. Residues 1541–1543 carry the Cell attachment site motif; that stretch reads RGD. N1581 carries an N-linked (GlcNAc...) asparagine glycan. The EGF-like 27; calcium-binding domain maps to 1606-1647; sequence DIDECQELPGLCQGGKCINTFGSFQCRCPTGYYLNEDTRVCD. S1628 carries an O-linked (Glc) serine glycan. The region spanning 1648-1688 is the EGF-like 28; calcium-binding domain; that stretch reads DVNECETPGICGPGTCYNTVGNYTCICPPDYMQVNGGNNCM. N-linked (GlcNAc...) asparagine glycosylation occurs at N1669. One can recognise a TB 7 domain in the interval 1693–1748; it reads SLCYRNYYADNQTCDGELLFNMTKKMCCCSYNIGRAWNKPCEQCPIPSTDEFATLC. Residues N1703 and N1713 are each glycosylated (N-linked (GlcNAc...) asparagine). The 42-residue stretch at 1766-1807 folds into the EGF-like 29; calcium-binding domain; that stretch reads DIDECREIPGVCENGVCINMVGSFRCECPVGFFYNDKLLVCE. 40 disulfides stabilise this stretch: C1770–C1782, C1777–C1791, C1793–C1806, C1812–C1824, C1818–C1833, C1835–C1847, C1853–C1865, C1860–C1874, C1876–C1889, C1895–C1905, C1900–C1914, C1916–C1928, C1934–C1947, C1942–C1956, C1958–C1971, C1977–C1989, C1984–C1998, C2000–C2011, C2017–C2029, C2024–C2038, C2040–C2053, C2061–C2083, C2070–C2096, C2084–C2099, C2085–C2111, C2131–C2142, C2137–C2151, C2153–C2164, C2170–C2181, C2176–C2190, C2192–C2204, C2210–C2221, C2217–C2230, C2232–C2245, C2251–C2265, C2258–C2274, C2276–C2289, C2295–C2307, C2302–C2316, and C2318–C2331. One can recognise an EGF-like 30; calcium-binding domain in the interval 1808–1848; that stretch reads DIDECQNGPVCQRNAECINTAGSYRCDCKPGYRFTSTGQCN. The O-linked (Glc) serine glycan is linked to S1830. The 42-residue stretch at 1849–1890 folds into the EGF-like 31; calcium-binding domain; the sequence is DRNECQEIPNICSHGQCIDTVGSFYCLCHTGFKTNADQTMCL. S1871 is a glycosylation site (O-linked (Glc) serine). The region spanning 1891–1929 is the EGF-like 32; calcium-binding domain; that stretch reads DINECERDACGNGTCRNTIGSFNCRCNHGFILSHNNDCI. N1902 is a glycosylation site (N-linked (GlcNAc...) asparagine). S1911 carries O-linked (Glc) serine glycosylation. Residues 1930 to 1972 enclose the EGF-like 33; calcium-binding domain; it reads DVDECATGNGNLCRNGQCINTVGSFQCQCNEGYEVAPDGRTCV. An O-linked (Glc) serine glycan is attached at S1953. Positions 1973–2012 constitute an EGF-like 34; calcium-binding domain; the sequence is DINECLLDPRKCAPGTCQNLDGSYRCICPPGYSLQNDKCE. Residues 2013–2054 enclose the EGF-like 35; calcium-binding domain; it reads DIDECVEEPEICALGTCSNTEGSFKCLCPDGFSLSSTGRRCQ. S2035 carries O-linked (Glc) serine glycosylation. The TB 8 domain maps to 2059 to 2111; sequence SYCYAKFEGGKCSSPKSRNHSKQECCCALKGEGWGDPCELCPTEPDEAFRQIC. N-linked (GlcNAc...) asparagine glycosylation is present at N2077. In terms of domain architecture, EGF-like 36; calcium-binding spans 2127–2165; sequence DMDECKEPDVCKHGQCINTDGSYRCECPFGYILQGNECV. O-linked (Glc) serine glycosylation occurs at S2148. The EGF-like 37; calcium-binding domain occupies 2166–2205; the sequence is DTDECSVGNPCGNGTCKNVIGGFECTCEEGFEPGPMMTCE. Residue N2178 is glycosylated (N-linked (GlcNAc...) asparagine). Residues 2206–2246 form the EGF-like 38; calcium-binding domain; it reads DINECAQNPLLCAFRCVNTYGSYECKCPAGYVLREDRRMCK. S2227 carries an O-linked (Glc) serine glycan. The 44-residue stretch at 2247-2290 folds into the EGF-like 39; calcium-binding domain; that stretch reads DEDECEEGKHDCAEKQMECKNLIGTYLCICGPGYQRRPDGEGCV. The EGF-like 40; calcium-binding domain maps to 2291 to 2332; that stretch reads DENECQTKPGICENGRCLNTRGSYTCECNDGFTASPNQDECL. An O-linked (Glc) serine glycan is attached at S2313. Residues 2337–2390 enclose the TB 9 domain; sequence GYCFTEVLQNMCQIGSSNRNPVTKSECCCDGGRGWGPHCEICPFQGTVAFKKLC. Positions 2402–2443 constitute an EGF-like 41; calcium-binding domain; it reads DIDECKVIHDVCRNGECVNDRGSYHCICKTGYTPDITGTACV. Cystine bridges form between C2406/C2418, C2413/C2427, C2429/C2442, C2448/C2459, C2455/C2468, C2470/C2483, C2489/C2500, C2496/C2509, C2511/C2522, C2528/C2541, C2535/C2550, C2552/C2565, C2571/C2581, C2577/C2590, C2592/C2605, C2611/C2622, C2617/C2631, C2633/C2646, C2652/C2663, C2659/C2672, and C2674/C2686. In terms of domain architecture, EGF-like 42; calcium-binding spans 2444 to 2484; sequence DLNECNQAPKPCNFICKNTEGSYQCSCPKGYILQEDGRSCK. S2465 carries an O-linked (Glc) serine glycan. An EGF-like 43; calcium-binding domain is found at 2485 to 2523; it reads DLDECATKQHNCQFLCVNTIGSFTCKCPPGFTQHHTACI. The EGF-like 44; calcium-binding domain occupies 2524–2566; sequence DNNECTSDINLCGSKGICQNTPGSFTCECQRGFSLDPSGASCE. O-linked (Glc) serine glycosylation occurs at S2547. The 40-residue stretch at 2567 to 2606 folds into the EGF-like 45; calcium-binding domain; that stretch reads DVDECEGNHRCQHGCQNIIGGYRCSCPQGYLQHYQWNQCV. The region spanning 2607-2647 is the EGF-like 46; calcium-binding domain; sequence DENECLSAHICGGASCHNTLGSYKCMCPAGFQYEQFSGGCQ. S2628 carries O-linked (Glc) serine glycosylation. The 40-residue stretch at 2648 to 2687 folds into the EGF-like 47; calcium-binding domain; sequence DINECGSAQAPCSYGCSNTEGGYLCACPPGYFRIGQGHCV. S2702 and S2709 each carry phosphoserine. N-linked (GlcNAc...) asparagine glycosylation is found at N2734, N2750, and N2767.

It belongs to the fibrillin family. As to quaternary structure, interacts with COL16A1. Interacts with integrin alpha-V/beta-3. Interacts with ADAMTS10; this interaction promotes microfibril assembly. Interacts with THSD4; this interaction promotes fibril formation. Interacts (via N-terminal domain) with FBLN2 and FBLN5. Interacts with ELN. Forms a ternary complex with ELN and FBLN2 or FBLN5 and a significant interaction with ELN seen only in the presence of FBLN2 or FBLN5. Interacts (via N-terminal domain) with LTBP2 (via C-terminal domain) in a Ca(+2)-dependent manner. Interacts (via N-terminal domain) with LTBP1 (via C-terminal domain). Interacts with integrins ITGA5:ITGB1, ITGAV:ITGB3 and ITGAV:ITGB6. Interacts (via N-terminal domain) with BMP2, BMP4, BMP7, BMP10 and GDF5. Interacts (via N-terminal domain) with MFAP2 and MFAP5. Interacts with ADAMTSL5. Interacts with MFAP4. Interacts (via N-terminal domain) with TNFSF11 in a Ca(+2)-dependent manner. Interacts (via N-terminal domain) with EFEMP2; this interaction inhibits EFEMP2 binding to LOX and ELN. Cleavage of N- and C-terminus by furin is required for incorporation into the extracellular matrix and assembly into microfibrils. The C-terminus, which corresponds to the Asprosin chain, was initially thought to constitute a propeptide. Fibrillin-1 and Asprosin chains are still linked together during the secretion from cells, but are subsequently separated by furin, an essential step for incorporation of Fibrillin-1 into the nascent microfibrils. In terms of processing, forms intermolecular disulfide bonds either with other fibrillin-1 molecules or with other components of the microfibrils. Post-translationally, O-glycosylated on serine residues by POGLUT2 and POGLUT3 which is necessary for efficient protein secretion.

It localises to the secreted. The protein localises to the extracellular space. Its subcellular location is the extracellular matrix. Its function is as follows. Structural component of the 10-12 nm diameter microfibrils of the extracellular matrix, which conveys both structural and regulatory properties to load-bearing connective tissues. Fibrillin-1-containing microfibrils provide long-term force bearing structural support. In tissues such as the lung, blood vessels and skin, microfibrils form the periphery of the elastic fiber, acting as a scaffold for the deposition of elastin. In addition, microfibrils can occur as elastin-independent networks in tissues such as the ciliary zonule, tendon, cornea and glomerulus where they provide tensile strength and have anchoring roles. Fibrillin-1 also plays a key role in tissue homeostasis through specific interactions with growth factors, such as the bone morphogenetic proteins (BMPs), growth and differentiation factors (GDFs) and latent transforming growth factor-beta-binding proteins (LTBPs), cell-surface integrins and other extracellular matrix protein and proteoglycan components. Regulates osteoblast maturation by controlling TGF-beta bioavailability and calibrating TGF-beta and BMP levels, respectively. Negatively regulates osteoclastogenesis by binding and sequestering an osteoclast differentiation and activation factor TNFSF11. This leads to disruption of TNFSF11-induced Ca(2+) signaling and impairment of TNFSF11-mediated nuclear translocation and activation of transcription factor NFATC1 which regulates genes important for osteoclast differentiation and function. Mediates cell adhesion via its binding to cell surface receptors integrins ITGAV:ITGB3 and ITGA5:ITGB1. Binds heparin and this interaction plays an important role in the assembly of microfibrils. Hormone that targets the liver to increase plasma glucose levels. Secreted by white adipose tissue and circulates in the plasma. Acts in response to fasting and promotes blood glucose elevation by binding to the surface of hepatocytes. Promotes hepatocyte glucose release by activating the protein kinase A activity in the liver, resulting in rapid glucose release into the circulation. The polypeptide is Fibrillin-1 (Bos taurus (Bovine)).